The primary structure comprises 754 residues: Protein neuralized (754 aa).

In terms of domain architecture, NHR 1 spans 106–260 (PLQFHSVHGD…NCTGIEFLDS (155 aa)). Residues 280-297 (QQQQMPQPAANASSALNS) show a composition bias toward low complexity. Positions 280–308 (QQQQMPQPAANASSALNSHHPHQQSRRSL) are disordered. Serine 338 and serine 341 each carry phosphoserine. An NHR 2 domain is found at 368–523 (PVPFHNTKGR…STQSLRMFRQ (156 aa)). The RING-type zinc finger occupies 701-742 (CTICYENPIDSVLYMCGHMCMCYDCAIEQWRGVGGGQCPLCR).

It is found in the nucleus. Its function is as follows. Involved in neurogenesis. Interacts with other neurogenic proteins in the specification of the neuroblast versus epidermoblast cell fate. This Drosophila melanogaster (Fruit fly) protein is Protein neuralized (neur).